The sequence spans 34 residues: U4-theraphotoxin-Hs1a (34 aa).

Cystine bridges form between Cys-3–Cys-17, Cys-10–Cys-22, and Cys-16–Cys-33.

It belongs to the neurotoxin 14 (magi-1) family. 05 (ICK-7) subfamily. As to expression, expressed by the venom gland.

Its subcellular location is the secreted. Its function is as follows. Intracisternal injection paralyzes mice. The polypeptide is U4-theraphotoxin-Hs1a (Cyriopagopus schmidti (Chinese bird spider)).